Here is a 532-residue protein sequence, read N- to C-terminus: Developmental and secondary metabolism regulator ve1 (532 aa).

The region spanning N26–R220 is the Velvet domain. Residues E40–C45 carry the Nuclear localization signal motif. Residues V217–D229 are compositionally biased toward basic residues. Disordered stretches follow at residues V217 to S440 and P458 to G520. The span at G233–G250 shows a compositional bias: low complexity. Basic and acidic residues-rich tracts occupy residues F251–R260 and S283–R294. Pro residues predominate over residues Y302–S317. The span at S397 to T411 shows a compositional bias: low complexity. Residues M435–L463 are PEST. Positions F481–R493 are enriched in polar residues.

The protein belongs to the velvet family. VeA subfamily. As to quaternary structure, component of the heterotrimeric velvet complex composed of laeA, ve1 and velB; Ve1 acting as a bridging protein between laeA and velB. Interacts directly with laeA and velB.

It localises to the nucleus. The protein localises to the cytoplasm. Its function is as follows. Component of the velvet transcription factor complex that controls sexual/asexual developmental ratio in response to light, promoting sexual development in the darkness while stimulating asexual sporulation under illumination. The velvet complex hat acts as a global regulator for secondary metabolite gene expression. Controls the expression of the aurofusarin and trichothecene gene clusters. Also controls the expression of the deoxynivalenol (DON) gene cluster. Regulates hyphal growth and pigment formation. Acts as a positive regulator of virulence. This is Developmental and secondary metabolism regulator ve1 from Gibberella zeae (strain ATCC MYA-4620 / CBS 123657 / FGSC 9075 / NRRL 31084 / PH-1) (Wheat head blight fungus).